Consider the following 342-residue polypeptide: N-acetyl-gamma-glutamyl-phosphate reductase (342 aa).

Residue Cys-149 is part of the active site.

This sequence belongs to the NAGSA dehydrogenase family. Type 1 subfamily.

The protein resides in the cytoplasm. It catalyses the reaction N-acetyl-L-glutamate 5-semialdehyde + phosphate + NADP(+) = N-acetyl-L-glutamyl 5-phosphate + NADPH + H(+). It functions in the pathway amino-acid biosynthesis; L-arginine biosynthesis; N(2)-acetyl-L-ornithine from L-glutamate: step 3/4. Functionally, catalyzes the NADPH-dependent reduction of N-acetyl-5-glutamyl phosphate to yield N-acetyl-L-glutamate 5-semialdehyde. The sequence is that of N-acetyl-gamma-glutamyl-phosphate reductase from Cereibacter sphaeroides (strain ATCC 17023 / DSM 158 / JCM 6121 / CCUG 31486 / LMG 2827 / NBRC 12203 / NCIMB 8253 / ATH 2.4.1.) (Rhodobacter sphaeroides).